Here is a 101-residue protein sequence, read N- to C-terminus: Citrinin resistance protein, mitochondrial (101 aa).

Its subcellular location is the mitochondrion. Its function is as follows. Mitochondrial protein that is involved in citrinin resistance. This Saccharomyces cerevisiae (strain ATCC 204508 / S288c) (Baker's yeast) protein is Citrinin resistance protein, mitochondrial.